The sequence spans 591 residues: Maintenance of mitochondrial morphology protein 1 (591 aa).

The Lumenal portion of the chain corresponds to 1 to 83 (MGFNIPWNGT…AQPSLSFTQG (83 aa)). A helical transmembrane segment spans residues 84-104 (LLVGQLSVVLLIGAFIKFFIF). Topologically, residues 105 to 591 (GEAPPPPSRS…GSMPDSVAVT (487 aa)) are cytoplasmic. Disordered stretches follow at residues 138–159 (PRTL…SSST), 170–189 (YSAT…VHHS), 334–398 (PGTS…KHAH), and 479–591 (EAEA…VAVT). Polar residues-rich tracts occupy residues 146–159 (STSN…SSST) and 170–179 (YSATPTNPTS). Positions 180–189 (KHGRSRVHHS) are enriched in basic residues. The SMP-LTD domain maps to 192–462 (QPESLDWFNV…EPRVQVVGLP (271 aa)). Residues 336-371 (TSDQTMGPSASPPNQSTSTETASINDQTSEGQSTQR) are compositionally biased toward polar residues. A compositionally biased stretch (low complexity) spans 379–389 (PTNSTPTAATA). Composition is skewed to gly residues over residues 496–525 (TAGG…GMGY) and 536–550 (GDGG…GAGG). The span at 563–578 (GGDDGEGPGRRSDERF) shows a compositional bias: basic and acidic residues.

Belongs to the MMM1 family. In terms of assembly, homodimer. Component of the ER-mitochondria encounter structure (ERMES) or MDM complex, composed of MMM1, MDM10, MDM12 and MDM34. An MMM1 homodimer associates with one molecule of MDM12 on each side in a pairwise head-to-tail manner, and the SMP-LTD domains of MMM1 and MDM12 generate a continuous hydrophobic tunnel for phospholipid trafficking.

The protein resides in the endoplasmic reticulum membrane. In terms of biological role, component of the ERMES/MDM complex, which serves as a molecular tether to connect the endoplasmic reticulum (ER) and mitochondria. Components of this complex are involved in the control of mitochondrial shape and protein biogenesis, and function in nonvesicular lipid trafficking between the ER and mitochondria. The MDM12-MMM1 subcomplex functions in the major beta-barrel assembly pathway that is responsible for biogenesis of all outer membrane beta-barrel proteins, and acts in a late step after the SAM complex. The MDM10-MDM12-MMM1 subcomplex further acts in the TOM40-specific pathway after the action of the MDM12-MMM1 complex. Essential for establishing and maintaining the structure of mitochondria and maintenance of mtDNA nucleoids. The chain is Maintenance of mitochondrial morphology protein 1 from Ajellomyces capsulatus (strain G186AR / H82 / ATCC MYA-2454 / RMSCC 2432) (Darling's disease fungus).